The following is a 252-amino-acid chain: 5'-nucleotidase SurE (252 aa).

A divalent metal cation is bound by residues Asp8, Asp9, Ser42, and Asn94.

The protein belongs to the SurE nucleotidase family. Requires a divalent metal cation as cofactor.

It is found in the cytoplasm. The catalysed reaction is a ribonucleoside 5'-phosphate + H2O = a ribonucleoside + phosphate. Nucleotidase that shows phosphatase activity on nucleoside 5'-monophosphates. The chain is 5'-nucleotidase SurE from Ehrlichia ruminantium (strain Gardel).